A 1025-amino-acid polypeptide reads, in one-letter code: Beta-galactosidase (1025 aa).

The substrate site is built by Asn-103 and Asp-202. Asp-202 is a Na(+) binding site. Mg(2+) contacts are provided by Glu-417, His-419, and Glu-462. Substrate-binding positions include Glu-462 and 538 to 541 (EYAH). Catalysis depends on Glu-462, which acts as the Proton donor. Residue Glu-538 is the Nucleophile of the active site. Mg(2+) is bound at residue Asn-598. Residues Phe-602 and Asn-605 each contribute to the Na(+) site. 2 residues coordinate substrate: Asn-605 and Trp-1003.

This sequence belongs to the glycosyl hydrolase 2 family. In terms of assembly, homotetramer. It depends on Mg(2+) as a cofactor. Na(+) is required as a cofactor.

It catalyses the reaction Hydrolysis of terminal non-reducing beta-D-galactose residues in beta-D-galactosides.. The polypeptide is Beta-galactosidase (Citrobacter koseri (strain ATCC BAA-895 / CDC 4225-83 / SGSC4696)).